The following is an 86-amino-acid chain: MADERTGDSVKTRYDIALMNLNDIKIAVFRDSLSTYVEQKTGLTIQFNWPKSRCLVISTLCKIPFPTKSAAELQEMCKYQCFVSVL.

In Homo sapiens (Human), this protein is Protein U17 (U17/U16).